We begin with the raw amino-acid sequence, 729 residues long: MSKFIEPSVEEIKLEKVYQDMGLSDQEYEKVCDILGRQPNFTETGIFSVMWSEHCSYKHSKPFLKQFPTSGEHVLMGPGEGAGVVDIGDNQAVVFKVESHNHPSAIEPYQGAATGVGGIIRDIVSIGARPINLLNSLRFGELDNKQNQRLLKGVVKGIGGYGNCIGIPTTAGEIEFDERYDGNPLVNAMCVGVINHDMIQKGTAKGVGNSVIYVGLKTGRDGIHGATFASEELTEESESKRPSVQIGDPFVGKKLMEATLEAITFDELVGIQDMGAAGLTSSSSEMAAKGGSGLHLRLEQVPTREPGISPYEMMLSETQERMLLVVEKGNEQKFLDLFDKHELDSAVIGEVTDTNRFVLTYDDEVYADIPVEPLADEAPVYILEGEEKDYNTSKNDYTHIDVKDTFFKLLKHPTIASKHYLYDQYDQQVGANTIIKPGLQASVVRVEGTNKAIASTIDGEARYVYNNPYEGGKMVVAEAYRNLIAVGATPLAMTDCLNYGSPEKKEIYQQLIDSTKGMAEACDILKTPVVSGNVSLYNETKGTSIFPTPVVGMVGLIENVNYLNDFEPQVGDKLYLIGDTKDDFGGSQLEKLIYGKVNHEFESLDLSSEVEKGESIKTAIREGLLSHVQTVGKGGLLITLAKLSAHYGLGLKSSIDITNAQLFSETQGRYVVSVKSGKTLNIDNAIEIGLLTDSDNFKVTTPYTEISENVSDIKQIWEGAIAQCLTTQD.

Histidine 54 is an active-site residue. Positions 57 and 96 each coordinate ATP. Glutamate 98 is a binding site for Mg(2+). Substrate is bound by residues serine 99–histidine 102 and arginine 121. Histidine 100 serves as the catalytic Proton acceptor. A Mg(2+)-binding site is contributed by aspartate 122. Glutamine 245 contributes to the substrate binding site. Aspartate 273 provides a ligand contact to Mg(2+). Glutamate 317–glutamine 319 is a substrate binding site. Residues aspartate 495 and glycine 532 each coordinate ATP. Residue asparagine 533 participates in Mg(2+) binding. Serine 535 contacts substrate.

It belongs to the FGAMS family. As to quaternary structure, monomer. Part of the FGAM synthase complex composed of 1 PurL, 1 PurQ and 2 PurS subunits.

It is found in the cytoplasm. The catalysed reaction is N(2)-formyl-N(1)-(5-phospho-beta-D-ribosyl)glycinamide + L-glutamine + ATP + H2O = 2-formamido-N(1)-(5-O-phospho-beta-D-ribosyl)acetamidine + L-glutamate + ADP + phosphate + H(+). It functions in the pathway purine metabolism; IMP biosynthesis via de novo pathway; 5-amino-1-(5-phospho-D-ribosyl)imidazole from N(2)-formyl-N(1)-(5-phospho-D-ribosyl)glycinamide: step 1/2. Its function is as follows. Part of the phosphoribosylformylglycinamidine synthase complex involved in the purines biosynthetic pathway. Catalyzes the ATP-dependent conversion of formylglycinamide ribonucleotide (FGAR) and glutamine to yield formylglycinamidine ribonucleotide (FGAM) and glutamate. The FGAM synthase complex is composed of three subunits. PurQ produces an ammonia molecule by converting glutamine to glutamate. PurL transfers the ammonia molecule to FGAR to form FGAM in an ATP-dependent manner. PurS interacts with PurQ and PurL and is thought to assist in the transfer of the ammonia molecule from PurQ to PurL. The sequence is that of Phosphoribosylformylglycinamidine synthase subunit PurL from Staphylococcus aureus (strain Mu3 / ATCC 700698).